The chain runs to 498 residues: Sulfate adenylyltransferase subunit 1 (498 aa).

Residues 30-246 enclose the tr-type G domain; sequence TRPLRLITCG…LELATTRSAQ (217 aa). The G1 stretch occupies residues 39-46; that stretch reads GSVDDGKS. GTP is bound at residue 39-46; sequence GSVDDGKS. Residues 97-101 form a G2 region; the sequence is GITID. The interval 118–121 is G3; it reads DTPG. Residues 118–122 and 173–176 contribute to the GTP site; these read DTPGH and NKID. The G4 stretch occupies residues 173–176; that stretch reads NKID. The G5 stretch occupies residues 210–212; that stretch reads SAL.

Belongs to the TRAFAC class translation factor GTPase superfamily. Classic translation factor GTPase family. CysN/NodQ subfamily. As to quaternary structure, heterodimer composed of CysD, the smaller subunit, and CysN.

It carries out the reaction sulfate + ATP + H(+) = adenosine 5'-phosphosulfate + diphosphate. Its pathway is sulfur metabolism; hydrogen sulfide biosynthesis; sulfite from sulfate: step 1/3. With CysD forms the ATP sulfurylase (ATPS) that catalyzes the adenylation of sulfate producing adenosine 5'-phosphosulfate (APS) and diphosphate, the first enzymatic step in sulfur assimilation pathway. APS synthesis involves the formation of a high-energy phosphoric-sulfuric acid anhydride bond driven by GTP hydrolysis by CysN coupled to ATP hydrolysis by CysD. This chain is Sulfate adenylyltransferase subunit 1, found in Rhizobium meliloti (strain 1021) (Ensifer meliloti).